Reading from the N-terminus, the 501-residue chain is Glutamyl-tRNA(Gln) amidotransferase subunit A (501 aa).

Active-site charge relay system residues include Lys80 and Ser155. Residue Ser179 is the Acyl-ester intermediate of the active site.

The protein belongs to the amidase family. GatA subfamily. As to quaternary structure, heterotrimer of A, B and C subunits.

The catalysed reaction is L-glutamyl-tRNA(Gln) + L-glutamine + ATP + H2O = L-glutaminyl-tRNA(Gln) + L-glutamate + ADP + phosphate + H(+). In terms of biological role, allows the formation of correctly charged Gln-tRNA(Gln) through the transamidation of misacylated Glu-tRNA(Gln) in organisms which lack glutaminyl-tRNA synthetase. The reaction takes place in the presence of glutamine and ATP through an activated gamma-phospho-Glu-tRNA(Gln). This is Glutamyl-tRNA(Gln) amidotransferase subunit A from Cutibacterium acnes (strain DSM 16379 / KPA171202) (Propionibacterium acnes).